We begin with the raw amino-acid sequence, 226 residues long: V-type proton ATPase subunit E (226 aa).

It belongs to the V-ATPase E subunit family. In terms of assembly, V-ATPase is a heteromultimeric enzyme made up of two complexes: the ATP-hydrolytic V1 complex and the proton translocation V0 complex. The V1 complex consists of three catalytic AB heterodimers that form a heterohexamer, three peripheral stalks each consisting of EG heterodimers, one central rotor including subunits D and F, and the regulatory subunits C and H. The proton translocation complex V0 consists of the proton transport subunit a, a ring of proteolipid subunits c9c'', rotary subunit d, subunits e and f, and the accessory subunits VhaAC45 and ATP6AP2.

Its function is as follows. Subunit of the V1 complex of vacuolar(H+)-ATPase (V-ATPase), a multisubunit enzyme composed of a peripheral complex (V1) that hydrolyzes ATP and a membrane integral complex (V0) that translocates protons. V-ATPase is responsible for acidifying and maintaining the pH of intracellular compartments and in some cell types, is targeted to the plasma membrane, where it is responsible for acidifying the extracellular environment. The protein is V-type proton ATPase subunit E (Vha26) of Drosophila melanogaster (Fruit fly).